Consider the following 205-residue polypeptide: ATP-dependent Clp protease proteolytic subunit (205 aa).

Serine 101 (nucleophile) is an active-site residue. The active site involves histidine 126.

It belongs to the peptidase S14 family. Component of the chloroplastic Clp protease core complex.

The protein resides in the plastid. It localises to the chloroplast stroma. The enzyme catalyses Hydrolysis of proteins to small peptides in the presence of ATP and magnesium. alpha-casein is the usual test substrate. In the absence of ATP, only oligopeptides shorter than five residues are hydrolyzed (such as succinyl-Leu-Tyr-|-NHMec, and Leu-Tyr-Leu-|-Tyr-Trp, in which cleavage of the -Tyr-|-Leu- and -Tyr-|-Trp bonds also occurs).. Functionally, cleaves peptides in various proteins in a process that requires ATP hydrolysis. Has a chymotrypsin-like activity. Plays a major role in the degradation of misfolded proteins. This is ATP-dependent Clp protease proteolytic subunit from Pinus contorta (Shore pine).